The primary structure comprises 50 residues: Protein PsbN (50 aa).

A helical transmembrane segment spans residues 14–34 (VAVTILAVLLALTGFGLWTAF).

This sequence belongs to the PsbN family.

The protein resides in the cellular thylakoid membrane. Functionally, may play a role in photosystem I and II biogenesis. The protein is Protein PsbN of Prochlorococcus marinus subsp. pastoris (strain CCMP1986 / NIES-2087 / MED4).